The primary structure comprises 232 residues: C4-dicarboxylate TRAP transporter small permease protein DctQ (232 aa).

4 helical membrane passes run Glu-30–Met-50, Ile-58–Ser-78, Leu-103–Ser-123, and Phe-167–Ile-187.

It belongs to the TRAP transporter small permease family. In terms of assembly, the complex comprises the extracytoplasmic solute receptor protein DctP, and the two transmembrane proteins DctQ and DctM.

Its subcellular location is the cell inner membrane. Functionally, part of the tripartite ATP-independent periplasmic (TRAP) transport system DctPQM involved in C4-dicarboxylates uptake. This is C4-dicarboxylate TRAP transporter small permease protein DctQ from Vibrio cholerae serotype O1 (strain ATCC 39315 / El Tor Inaba N16961).